A 58-amino-acid chain; its full sequence is Amyloid-beta precursor protein (58 aa).

Residues 1–34 lie on the Extracellular side of the membrane; that stretch reads ISEVKMDAEFRHDSGYEVHHQKLVFFAEDVGSNK. Positions 12, 16, 19, and 20 each coordinate Cu(2+). Residues histidine 12, tyrosine 16, histidine 19, and histidine 20 each contribute to the Zn(2+) site. Residues 35-58 traverse the membrane as a helical segment; it reads GAIIGLMVGGVVIATVIVITLVML.

The protein belongs to the APP family. Binds, via its C-terminus, to the PID domain of several cytoplasmic proteins, including APBB family members, the APBA family, MAPK8IP1, SHC1 and NUMB and DAB1. Binding to DAB1 inhibits its serine phosphorylation. Interacts (via NPXY motif) with DAB2 (via PID domain); the interaction is impaired by tyrosine phosphorylation of the NPXY motif. Also interacts with GPCR-like protein BPP, APPBP1, IB1, KNS2 (via its TPR domains), APPBP2 (via BaSS) and DDB1. In vitro, it binds MAPT via the MT-binding domains. Associates with microtubules in the presence of ATP and in a kinesin-dependent manner. Interacts, through a C-terminal domain, with GNAO1. Interacts with CPEB1, ANKS1B and AGER. Interacts with ITM2B. Interacts with ITM2C. Interacts with IDE. Can form homodimers; dimerization is enhanced in the presence of Cu(2+) ions. Can form homodimers; this is promoted by heparin binding. Interacts with SORL1 (via N-terminal ectodomain); this interaction retains APP in the trans-Golgi network and reduces processing into soluble APP-alpha and amyloid-beta peptides. Interacts with PLD3. Interacts with VDAC1. Interacts with NSG1; could regulate APP processing. Amyloid-beta protein 42 interacts with FPR2. Interacts with LRRK2. Interacts (via cytoplasmic domain) with KIF5B. Interacts (via C-terminus) with APBB2/FE65L1 (via C-terminus). Interacts (via intracellular domain) with APBB3. Proteolytically processed under normal cellular conditions. Cleavage either by alpha-secretase, beta-secretase or theta-secretase leads to generation and extracellular release of soluble APP peptides, S-APP-alpha and S-APP-beta, and the retention of corresponding membrane-anchored C-terminal fragments, C80, C83 and C99. Subsequent processing of C80 and C83 by gamma-secretase yields P3 peptides. This is the major secretory pathway and is non-amyloidogenic. Alternatively, presenilin/nicastrin-mediated gamma-secretase processing of C99 releases the amyloid-beta proteins, amyloid-beta protein 40 and amyloid-beta protein 42, major components of amyloid plaques, and the cytotoxic C-terminal fragments, gamma-CTF(50), gamma-CTF(57) and gamma-CTF(59). PSEN1 cleavage is more efficient with C83 than with C99 as substrate (in vitro). Amyloid-beta protein 40 and Amyloid-beta protein 42 are cleaved by ACE. Many other minor amyloid-beta peptides, amyloid-beta 1-X peptides, are found in cerebral spinal fluid (CSF) including the amyloid-beta X-15 peptides, produced from the cleavage by alpha-secretase.

The protein localises to the cell membrane. The protein resides in the membrane. It localises to the perikaryon. Its subcellular location is the cell projection. It is found in the growth cone. The protein localises to the clathrin-coated pit. The protein resides in the early endosome. It localises to the cytoplasmic vesicle. Its subcellular location is the secreted. It is found in the cell surface. The protein localises to the nucleus. The protein resides in the cytoplasm. Functions as a cell surface receptor and performs physiological functions on the surface of neurons relevant to neurite growth, neuronal adhesion and axonogenesis. Interaction between APP molecules on neighboring cells promotes synaptogenesis. Involved in cell mobility and transcription regulation through protein-protein interactions. Can promote transcription activation through binding to APBB1-KAT5 and inhibit Notch signaling through interaction with Numb. Couples to apoptosis-inducing pathways such as those mediated by G(o) and JIP. Inhibits G(o)-alpha ATPase activity. Acts as a kinesin I membrane receptor, mediating the axonal transport of beta-secretase and presenilin 1. By acting as a kinesin I membrane receptor, plays a role in axonal anterograde transport of cargo towards synapses in axons. May be involved in copper homeostasis/oxidative stress through copper ion reduction. In vitro, copper-metallated APP induces neuronal death directly or is potentiated through Cu(2+)-mediated low-density lipoprotein oxidation. Can regulate neurite outgrowth through binding to components of the extracellular matrix such as heparin and collagen I and IV. Induces a AGER-dependent pathway that involves activation of p38 MAPK, resulting in internalization of amyloid-beta peptide and mitochondrial dysfunction in cultured cortical neurons. Provides Cu(2+) ions for GPC1 which are required for release of nitric oxide (NO) and subsequent degradation of the heparan sulfate chains on GPC1. The polypeptide is Amyloid-beta precursor protein (APP) (Canis lupus familiaris (Dog)).